The primary structure comprises 443 residues: Ribosomal protein uS12 methylthiotransferase RimO (443 aa).

The MTTase N-terminal domain maps to 5-115; that stretch reads PNIGFISLGC…VMKHVHKYVP (111 aa). Residues Cys14, Cys50, Cys79, Cys147, Cys151, and Cys154 each contribute to the [4Fe-4S] cluster site. The 242-residue stretch at 133 to 374 folds into the Radical SAM core domain; that stretch reads LTPKHYAYLK…MQVQQRISAA (242 aa). Residues 377–443 form the TRAM domain; that stretch reads QQKVGKTLAV…ADEYDLWGTC (67 aa).

This sequence belongs to the methylthiotransferase family. RimO subfamily. [4Fe-4S] cluster serves as cofactor.

It is found in the cytoplasm. The enzyme catalyses L-aspartate(89)-[ribosomal protein uS12]-hydrogen + (sulfur carrier)-SH + AH2 + 2 S-adenosyl-L-methionine = 3-methylsulfanyl-L-aspartate(89)-[ribosomal protein uS12]-hydrogen + (sulfur carrier)-H + 5'-deoxyadenosine + L-methionine + A + S-adenosyl-L-homocysteine + 2 H(+). Catalyzes the methylthiolation of an aspartic acid residue of ribosomal protein uS12. The sequence is that of Ribosomal protein uS12 methylthiotransferase RimO from Actinobacillus pleuropneumoniae serotype 5b (strain L20).